The following is a 298-amino-acid chain: tRNA pseudouridine synthase B (298 aa).

Residue D45 is the Nucleophile of the active site.

It belongs to the pseudouridine synthase TruB family. Type 1 subfamily.

It carries out the reaction uridine(55) in tRNA = pseudouridine(55) in tRNA. Responsible for synthesis of pseudouridine from uracil-55 in the psi GC loop of transfer RNAs. In Thiobacillus denitrificans (strain ATCC 25259 / T1), this protein is tRNA pseudouridine synthase B.